The sequence spans 391 residues: Formate-dependent phosphoribosylglycinamide formyltransferase (391 aa).

N(1)-(5-phospho-beta-D-ribosyl)glycinamide contacts are provided by residues 18 to 19 and Glu-78; that span reads EL. ATP contacts are provided by residues Arg-110, Lys-151, 156-161, 191-194, and Glu-199; these read SSGKGQ and EEFI. Residues 115 to 305 enclose the ATP-grasp domain; it reads ELVSRDLKIK…EFELHLRAFL (191 aa). Mg(2+) contacts are provided by Glu-264 and Glu-276. Residues Asp-283, Lys-353, and 360 to 361 each bind N(1)-(5-phospho-beta-D-ribosyl)glycinamide; that span reads RR.

This sequence belongs to the PurK/PurT family. As to quaternary structure, homodimer.

It catalyses the reaction N(1)-(5-phospho-beta-D-ribosyl)glycinamide + formate + ATP = N(2)-formyl-N(1)-(5-phospho-beta-D-ribosyl)glycinamide + ADP + phosphate + H(+). It functions in the pathway purine metabolism; IMP biosynthesis via de novo pathway; N(2)-formyl-N(1)-(5-phospho-D-ribosyl)glycinamide from N(1)-(5-phospho-D-ribosyl)glycinamide (formate route): step 1/1. Its function is as follows. Involved in the de novo purine biosynthesis. Catalyzes the transfer of formate to 5-phospho-ribosyl-glycinamide (GAR), producing 5-phospho-ribosyl-N-formylglycinamide (FGAR). Formate is provided by PurU via hydrolysis of 10-formyl-tetrahydrofolate. This is Formate-dependent phosphoribosylglycinamide formyltransferase from Prochlorococcus marinus (strain MIT 9312).